A 297-amino-acid chain; its full sequence is Small ribosomal subunit protein uS2 (297 aa).

A disordered region spans residues 266–297 (GASWDAAEPSDWAATPAAAGQEWAASGATEQW). Low complexity predominate over residues 282–297 (AAAGQEWAASGATEQW).

Belongs to the universal ribosomal protein uS2 family. Component of the small ribosomal subunit. Mature ribosomes consist of a small (40S) and a large (60S) subunit. The 40S subunit contains about 33 different proteins and 1 molecule of RNA (18S). The 60S subunit contains about 49 different proteins and 3 molecules of RNA (25S, 5.8S and 5S). Interacts with rps21.

Its subcellular location is the cytoplasm. Functionally, required for the assembly and/or stability of the 40S ribosomal subunit. Required for the processing of the 20S rRNA-precursor to mature 18S rRNA in a late step of the maturation of 40S ribosomal subunits. This is Small ribosomal subunit protein uS2 (rps0) from Sclerotinia sclerotiorum (strain ATCC 18683 / 1980 / Ss-1) (White mold).